Here is a 302-residue protein sequence, read N- to C-terminus: Sulfate adenylyltransferase subunit 2 (302 aa).

It belongs to the PAPS reductase family. CysD subfamily. As to quaternary structure, heterodimer composed of CysD, the smaller subunit, and CysN.

The catalysed reaction is sulfate + ATP + H(+) = adenosine 5'-phosphosulfate + diphosphate. It functions in the pathway sulfur metabolism; hydrogen sulfide biosynthesis; sulfite from sulfate: step 1/3. With CysN forms the ATP sulfurylase (ATPS) that catalyzes the adenylation of sulfate producing adenosine 5'-phosphosulfate (APS) and diphosphate, the first enzymatic step in sulfur assimilation pathway. APS synthesis involves the formation of a high-energy phosphoric-sulfuric acid anhydride bond driven by GTP hydrolysis by CysN coupled to ATP hydrolysis by CysD. The chain is Sulfate adenylyltransferase subunit 2 from Xanthomonas oryzae pv. oryzae (strain MAFF 311018).